The following is a 341-amino-acid chain: DNA fragmentation factor subunit beta (341 aa).

One can recognise a CIDE-N domain in the interval 7–83 (KPKTFKLRSL…LLTAGQTWQG (77 aa)).

As to quaternary structure, heterodimer of DFFA and DFFB. Interacts with H1-1.

Its subcellular location is the cytoplasm. It localises to the nucleus. Inhibited by DFFA (DFF45). Interacts with HIST1H1A. In terms of biological role, nuclease that induces DNA fragmentation and chromatin condensation during apoptosis. Degrades naked DNA and induces apoptotic morphology. The sequence is that of DNA fragmentation factor subunit beta (DFFB) from Bos taurus (Bovine).